A 320-amino-acid chain; its full sequence is Integrin-binding sialoprotein (320 aa).

The N-terminal stretch at M1–A16 is a signal peptide. S31, S68, S76, S77, and S96 each carry phosphoserine. 3 disordered regions span residues P60–S117, L136–T225, and F238–G264. A compositionally biased stretch (acidic residues) spans S67–A106. N-linked (GlcNAc...) asparagine glycosylation occurs at N108. The segment covering K139–E152 has biased composition (basic and acidic residues). S153 bears the Phosphoserine mark. Residues S153–E176 show a composition bias toward acidic residues. 2 stretches are compositionally biased toward polar residues: residues Q177–E188 and G249–V261. 2 N-linked (GlcNAc...) asparagine glycosylation sites follow: N180 and N185. The Integrin-binding motif motif lies at R289 to D291. A sulfotyrosine mark is found at Y316 and Y317.

In terms of assembly, monomer. Interacts with integrins; the interaction promotes cell adhesion.

Its subcellular location is the secreted. Binds tightly to hydroxyapatite. Appears to form an integral part of the mineralized matrix. Probably important to cell-matrix interaction. Promotes adhesion and migration of various cells via the alpha-V/beta-3 integrin receptor (ITGAV:ITGB3). This chain is Integrin-binding sialoprotein (Ibsp), found in Rattus norvegicus (Rat).